A 168-amino-acid chain; its full sequence is Ribosome maturation factor RimM (168 aa).

A PRC barrel domain is found at 95-168 (EEGYYWSDLI…RITVDWGLDY (74 aa)).

The protein belongs to the RimM family. Binds ribosomal protein uS19.

The protein resides in the cytoplasm. In terms of biological role, an accessory protein needed during the final step in the assembly of 30S ribosomal subunit, possibly for assembly of the head region. Essential for efficient processing of 16S rRNA. May be needed both before and after RbfA during the maturation of 16S rRNA. It has affinity for free ribosomal 30S subunits but not for 70S ribosomes. The chain is Ribosome maturation factor RimM from Nitrosospira multiformis (strain ATCC 25196 / NCIMB 11849 / C 71).